Reading from the N-terminus, the 635-residue chain is Sodium- and chloride-dependent creatine transporter 1 (635 aa).

Residues 1 to 35 (MAKKSAENGIYSVSGDEKKGPLIAPGPDGAPAKGD) form a disordered region. The Cytoplasmic segment spans residues 1-60 (MAKKSAENGIYSVSGDEKKGPLIAPGPDGAPAKGDGPAGLGAPGGCLAVPPRETWTRQMD). Residues 25-35 (PGPDGAPAKGD) show a composition bias toward low complexity. A helical membrane pass occupies residues 61–81 (FIMSCVGFAVGLGNVWRFPYL). Over 82-87 (CYKNGG) the chain is Extracellular. A helical membrane pass occupies residues 88–108 (GVFLIPYVLIALVGGIPIFFL). The Cytoplasmic segment spans residues 109–138 (EISLGQFMKAGSINVWNICPLFKGLGYASM). The helical transmembrane segment at 139 to 159 (VIVFYCNTYYIMVLAWGFYYL) threads the bilayer. The Extracellular portion of the chain corresponds to 160 to 230 (VKSFTTTLPW…LSGGLEVPGA (71 aa)). N-linked (GlcNAc...) asparagine glycans are attached at residues Asn-192 and Asn-197. A helical membrane pass occupies residues 231-251 (LNSEVTLCLLACWVLVYFCVW). Over 252 to 269 (KGVKSTGKIVYFTATFPY) the chain is Cytoplasmic. The helical transmembrane segment at 270–290 (VVLVVLLVRGVLLPGALDGII) threads the bilayer. The Extracellular portion of the chain corresponds to 291–304 (YYLKPDWSKLRSPQ). A helical membrane pass occupies residues 305-325 (VWIDAGTQIFFSYAIGLGALT). The Cytoplasmic segment spans residues 326–341 (ALGSYNRFNNNCYKDA). Residues 342 to 362 (IILALINSGTSFFAGFVVFSI) traverse the membrane as a helical segment. Residues 363-394 (LGFMATEQGVHISKVAESGPGLAFIAYPRAVT) lie on the Extracellular side of the membrane. A helical transmembrane segment spans residues 395 to 415 (LMPVAPLWAALFFFMLLLLGL). The Cytoplasmic portion of the chain corresponds to 416 to 444 (DSQFVGVEGFITGLLDLLPASYYFRFQRE). A helical membrane pass occupies residues 445–465 (ISVALCCALCFVIDLSMVQMA). Topologically, residues 466–479 (GMYVFQLFDYYSAS) are extracellular. The helical transmembrane segment at 480-500 (GTTLLWQAFWECVAVAWVYGA) threads the bilayer. Over 501-520 (DRFMDDIACMIGYRPCPWMK) the chain is Cytoplasmic. The chain crosses the membrane as a helical span at residues 521-541 (WCWSFFTPLVCMGIFIFNIVY). Over 542 to 560 (YKPLVYNKTYVYPWWGEAM) the chain is Extracellular. N-linked (GlcNAc...) asparagine glycosylation is present at Asn-548. A helical membrane pass occupies residues 561–581 (GWAFALSSMLCVPLHLLGCLL). The Cytoplasmic segment spans residues 582–635 (RAKGTMAERWQHLTQPVWGLHHLEYRAQDADVRGLTTLTPVSESSKVVVVESVM). Phosphothreonine is present on residues Thr-617 and Thr-620. The residue at position 623 (Ser-623) is a Phosphoserine.

The protein belongs to the sodium:neurotransmitter symporter (SNF) (TC 2.A.22) family. SLC6A8 subfamily. In terms of processing, glycosylated. As to expression, prominent in kidney, heart, and muscle, also present in brain, but not in liver and intestine.

It is found in the cell membrane. The protein resides in the apical cell membrane. The catalysed reaction is creatine(out) + chloride(out) + 2 Na(+)(out) = creatine(in) + chloride(in) + 2 Na(+)(in). Functionally, creatine:sodium symporter which mediates the uptake of creatine. Plays an important role in supplying creatine to the brain via the blood-brain barrier. The polypeptide is Sodium- and chloride-dependent creatine transporter 1 (SLC6A8) (Oryctolagus cuniculus (Rabbit)).